We begin with the raw amino-acid sequence, 615 residues long: uncharacterized protein (615 aa).

D403 functions as the Proton acceptor in the catalytic mechanism. E406 serves as the catalytic Proton donor.

Belongs to the glycosyl hydrolase 15 family.

This is an uncharacterized protein from Methanocaldococcus jannaschii (strain ATCC 43067 / DSM 2661 / JAL-1 / JCM 10045 / NBRC 100440) (Methanococcus jannaschii).